The following is an 876-amino-acid chain: Neurotrypsin (876 aa).

A signal peptide spans 1–20 (MTLARFVLALMLGALPEVVG). Asparagine 26 carries N-linked (GlcNAc...) asparagine glycosylation. Positions 29–89 (LHHSHRHSPP…ALQAGHTPRP (61 aa)) are disordered. Residues 43-54 (YPSYYLPTQQRP) show a composition bias toward low complexity. Pro residues predominate over residues 57–72 (TRPPPPLPRFPRPPRA). The Kringle domain maps to 94–166 (CPAGEPWVSV…GKVDWGYCDC (73 aa)). 20 disulfide bridges follow: cysteine 94–cysteine 166, cysteine 110–cysteine 150, cysteine 139–cysteine 164, cysteine 196–cysteine 260, cysteine 209–cysteine 270, cysteine 240–cysteine 250, cysteine 306–cysteine 370, cysteine 319–cysteine 380, cysteine 350–cysteine 360, cysteine 413–cysteine 476, cysteine 426–cysteine 486, cysteine 456–cysteine 466, cysteine 526–cysteine 590, cysteine 539–cysteine 600, cysteine 570–cysteine 580, cysteine 620–cysteine 751, cysteine 662–cysteine 678, cysteine 766–cysteine 832, cysteine 795–cysteine 809, and cysteine 822–cysteine 851. 4 consecutive SRCR domains span residues 171 to 272 (VRLR…TCSF), 281 to 382 (IRLA…SCTP), 388 to 488 (IRLA…ACYP), and 501 to 602 (VRLM…ICDY). The segment at 620–631 (CGLRLLHRRQKR) is zymogen activation region. A Peptidase S1 domain is found at 632–875 (IIGGKNSLRG…FVPWIKSVTK (244 aa)). The active-site Charge relay system is histidine 677. N-linked (GlcNAc...) asparagine glycosylation occurs at asparagine 684. The Charge relay system role is filled by aspartate 727. Serine 826 (charge relay system) is an active-site residue.

This sequence belongs to the peptidase S1 family.

It localises to the secreted. Its function is as follows. Plays a role in neuronal plasticity and the proteolytic action may subserve structural reorganizations associated with learning and memory operations. This is Neurotrypsin (PRSS12) from Gorilla gorilla gorilla (Western lowland gorilla).